Consider the following 139-residue polypeptide: Large ribosomal subunit protein uL16 (139 aa).

Residues 1–20 (MLMPRRVKHRKQHHPTRRGA) show a composition bias toward basic residues. The tract at residues 1 to 24 (MLMPRRVKHRKQHHPTRRGAAKGG) is disordered.

Belongs to the universal ribosomal protein uL16 family. In terms of assembly, part of the 50S ribosomal subunit.

In terms of biological role, binds 23S rRNA and is also seen to make contacts with the A and possibly P site tRNAs. The sequence is that of Large ribosomal subunit protein uL16 from Nocardioides sp. (strain ATCC BAA-499 / JS614).